The chain runs to 389 residues: Pre-mRNA-splicing factor PRP46 (389 aa).

WD repeat units follow at residues 83–123, 126–165, 173–212, 215–254, 257–298, 308–347, and 356–389; these read AHQG…LKAV, GHVL…SDAG, GHLG…EAMT, GHTN…TELL, NHSK…NEFG, DNSR…LQQS, and PEQS…GTSY.

Belongs to the WD repeat PRL1/PRL2 family. As to quaternary structure, associated with the spliceosome.

The protein resides in the cytoplasm. It localises to the nucleus. Its function is as follows. Involved in pre-mRNA splicing and required for cell cycle progression at G2/M. The polypeptide is Pre-mRNA-splicing factor PRP46 (PRP46) (Candida albicans (strain SC5314 / ATCC MYA-2876) (Yeast)).